Here is a 157-residue protein sequence, read N- to C-terminus: MTEKPTYLTREGRARLEAELEHLMTVERKQIAERIAAAKELGDISESGEYEDAKKAQALLEGRIRELKHLLSRAEIIDEDQASTGEVRIGSSVTVRFEDDGSEETWTIVGSAEANPRQGRISNESPIGAALLGKRVRNKVTVHTPSGVMKLTILKVR.

Positions 47–75 (SGEYEDAKKAQALLEGRIRELKHLLSRAE) form a coiled coil.

This sequence belongs to the GreA/GreB family.

Necessary for efficient RNA polymerase transcription elongation past template-encoded arresting sites. The arresting sites in DNA have the property of trapping a certain fraction of elongating RNA polymerases that pass through, resulting in locked ternary complexes. Cleavage of the nascent transcript by cleavage factors such as GreA or GreB allows the resumption of elongation from the new 3'terminus. GreA releases sequences of 2 to 3 nucleotides. In Chloroflexus aggregans (strain MD-66 / DSM 9485), this protein is Transcription elongation factor GreA.